Here is a 93-residue protein sequence, read N- to C-terminus: Small ribosomal subunit protein uS15 (93 aa).

Belongs to the universal ribosomal protein uS15 family. As to quaternary structure, part of the 30S ribosomal subunit. Forms a bridge to the 50S subunit in the 70S ribosome, contacting the 23S rRNA.

In terms of biological role, one of the primary rRNA binding proteins, it binds directly to 16S rRNA where it helps nucleate assembly of the platform of the 30S subunit by binding and bridging several RNA helices of the 16S rRNA. Its function is as follows. Forms an intersubunit bridge (bridge B4) with the 23S rRNA of the 50S subunit in the ribosome. The chain is Small ribosomal subunit protein uS15 from Ehrlichia canis (strain Jake).